Reading from the N-terminus, the 2692-residue chain is Thyroglobulin (2692 aa).

The signal sequence occupies residues Met1 to Ala19. Residue Tyr24 is modified to Iodotyrosine; alternate. Sulfotyrosine; alternate is present on Tyr24. Tyr24 carries the thyroxine; alternate modification. A Triiodothyronine; alternate modification is found at Tyr24. Thyroglobulin type-1 domains lie at Leu31–Cys92, Leu93–Cys160, and Pro161–Thr248. 8 disulfide bridges follow: Cys34–Cys52, Cys63–Cys70, Cys72–Cys92, Cys96–Cys120, Cys131–Cys138, Cys140–Cys160, Cys164–Cys183, and Cys194–Cys235. Tyr108 is subject to Iodotyrosine. Asn110 carries an N-linked (GlcNAc...) asparagine glycan. Iodotyrosine; alternate is present on Tyr149. At Tyr149 the chain carries Diiodotyrosine; alternate. Asn198 is a glycosylation site (N-linked (GlcNAc...) asparagine). Tyr234 and Tyr258 each carry iodotyrosine. Residues Pro298 to Cys358 form the Thyroglobulin type-1 4 domain. Cystine bridges form between Cys301-Cys319, Cys330-Cys336, Cys338-Cys358, Cys364-Cys621, Cys408-Cys609, Cys632-Cys637, Cys639-Cys659, Cys663-Cys688, and Cys699-Cys704. N-linked (GlcNAc...) asparagine glycosylation is found at Asn485, Asn497, and Asn546. Thyroglobulin type-1 domains are found at residues Ser606–Cys659, Pro660–Cys727, and Pro728–Cys923. Tyr705 is modified (iodotyrosine; alternate). At Tyr705 the chain carries Thyroxine; alternate. At Tyr705 the chain carries Triiodothyronine; alternate. A Diiodotyrosine; alternate modification is found at Tyr705. 13 disulfide bridges follow: Cys706-Cys727, Cys731-Cys764, Cys775-Cys900, Cys902-Cys923, Cys927-Cys1033, Cys1044-Cys1051, Cys1053-Cys1079, Cys1128-Cys1147, Cys1151-Cys1171, Cys1183-Cys1190, Cys1192-Cys1212, Cys1237-Cys1287, and Cys1262-Cys1278. Residue Asn749 is glycosylated (N-linked (GlcNAc...) asparagine). Iodotyrosine is present on Tyr786. Asn855 carries N-linked (GlcNAc...) asparagine glycosylation. Tyr868 bears the Iodotyrosine; alternate mark. Tyr868 is modified (diiodotyrosine; alternate). Tyr885 bears the Diiodotyrosine mark. Asn949 carries N-linked (GlcNAc...) asparagine glycosylation. Tyr994 is subject to Iodotyrosine; alternate. Diiodotyrosine; alternate is present on Tyr994. Thyroglobulin type-1 domains follow at residues Ser1021–Cys1079, Leu1088–Cys1147, and Pro1148–Cys1212. Asn1142 is a glycosylation site (N-linked (GlcNAc...) asparagine). Tyr1241 carries the iodotyrosine modification. Tyr1241 carries the thyroxine modification. Residues Asn1296 and Asn1384 are each glycosylated (N-linked (GlcNAc...) asparagine). Intrachain disulfides connect Cys1372–Cys1392, Cys1395–Cys1406, Cys1409–Cys1423, Cys1426–Cys1443, Cys1447–Cys1456, Cys1476–Cys1498, Cys1535–Cys1559, Cys1539–Cys1545, Cys1571–Cys1594, Cys1656–Cys1681, Cys1660–Cys1666, Cys1665–Cys1766, and Cys1692–Cys1709. 3 Type II repeats span residues Pro1389–Gln1402, Glu1403–Gly1419, and Ser1420–Gly1436. Tyr1400 is subject to Iodotyrosine; alternate. Tyr1400 bears the Diiodotyrosine; alternate mark. The Thyroglobulin type-1 11 domain maps to Val1444–Cys1498. Residues Cys1535–Phe1655 form a Type IIIA repeat. Residues Cys1656 to Trp1823 form a Type IIIB repeat. A glycan (N-linked (GlcNAc...) asparagine) is linked at Asn1800. Cystine bridges form between Cys1824/Cys1850, Cys1828/Cys1835, Cys1859/Cys1870, Cys1927/Cys1955, Cys1931/Cys1937, Cys1936/Cys2007, Cys1966/Cys1979, Cys2061/Cys2085, Cys2065/Cys2071, and Cys2094/Cys2103. A Type IIIA repeat occupies Cys1824–Glu1926. One copy of the Type IIIB repeat lies at Cys1927 to Arg2060. The N-linked (GlcNAc...) asparagine glycan is linked to Asn1944. Residues Cys2061–Pro2118 form a Type IIIA repeat. The residue at position 2115 (Tyr2115) is an Iodotyrosine. The tract at residues Asp2119–Lys2692 is cholinesterase-like (ChEL). Asn2181 and Asn2226 each carry an N-linked (GlcNAc...) asparagine glycan. Thyroxine is present on Tyr2467. Iodotyrosine; alternate is present on Tyr2500. Tyr2500 carries the post-translational modification Thyroxine; alternate. Tyr2500 carries the triiodothyronine; alternate modification. The residue at position 2500 (Tyr2500) is a Diiodotyrosine; alternate. Residues Tyr2514 and Tyr2544 each carry the iodotyrosine modification. The cysteines at positions 2518 and 2642 are disulfide-linked. The residue at position 2624 (Tyr2624) is a Diiodotyrosine. Positions Glu2658–Asp2671 are enriched in acidic residues. Residues Glu2658–Lys2692 are disordered. Tyr2690 bears the Iodotyrosine; alternate mark. Tyr2690 is subject to Thyroxine; alternate. Triiodothyronine; alternate is present on Tyr2690. Tyr2690 carries the post-translational modification Diiodotyrosine; alternate.

The protein belongs to the type-B carboxylesterase/lipase family. In terms of assembly, monomer. Homodimer (via ChEL region); occurs in the endoplasmic reticulum and is required for export to the Golgi apparatus. Homooligomer; disulfide-linked; stored in this form in the thyroid follicle lumen. In terms of processing, iodinated on tyrosine residues by TPO. There are 4 pairs of iodinated tyrosines used for coupling: acceptor Tyr-24 is coupled to donor Tyr-149 or Tyr-234, acceptor Tyr-2500 is coupled to donor Tyr-2467, acceptor Tyr-2690 in monomer 1 is coupled to donor Tyr-2690 in monomer 2 and acceptor Tyr-1241 in monomer 1 is coupled to donor Tyr-108 in monomer 2. Post-translationally, sulfated tyrosines are desulfated during iodination. Undergoes sequential proteolysis by cathepsins to release thyroxine (T4) and triiodothyronine (T3) hormones. In the thyroid follicle lumen, cross-linked TG (storage form) is solubilized by limited proteolysis mediated by cathepsins CTSB and/or CTSL. Partially cleaved TG is further processed by CTSK/cathepsin K and/or CTSL resulting in the release of T4. Following endocytosis, further processing occurs leading to the release of T3 and more T4 hormones. In terms of tissue distribution, expressed in thyroid epithelial cells.

It localises to the secreted. Functionally, acts as a substrate for the production of iodinated thyroid hormones thyroxine (T4) and triiodothyronine (T3). The synthesis of T3 and T4 involves iodination of selected tyrosine residues of TG/thyroglobulin followed by their oxidative coupling. Following TG re-internalization and lysosomal-mediated proteolysis, T3 and T4 are released from the polypeptide backbone leading to their secretion into the bloodstream. One dimer produces 7 thyroid hormone molecules. This is Thyroglobulin from Sus scrofa (Pig).